Consider the following 329-residue polypeptide: Diaminopimelate epimerase (329 aa).

Substrate is bound by residues Asn-14 and Asn-73. The active-site Proton donor is Cys-82. Residues 83–84, Asn-170, Asn-206, and 224–225 each bind substrate; these read GN and ER. The Proton acceptor role is filled by Cys-233. Residue 234 to 235 coordinates substrate; that stretch reads GT.

The protein belongs to the diaminopimelate epimerase family. As to quaternary structure, homodimer.

It localises to the cytoplasm. The catalysed reaction is (2S,6S)-2,6-diaminopimelate = meso-2,6-diaminopimelate. It participates in amino-acid biosynthesis; L-lysine biosynthesis via DAP pathway; DL-2,6-diaminopimelate from LL-2,6-diaminopimelate: step 1/1. Its function is as follows. Catalyzes the stereoinversion of LL-2,6-diaminopimelate (L,L-DAP) to meso-diaminopimelate (meso-DAP), a precursor of L-lysine and an essential component of the bacterial peptidoglycan. The protein is Diaminopimelate epimerase of Listeria monocytogenes serotype 4a (strain HCC23).